Consider the following 296-residue polypeptide: 4-hydroxy-tetrahydrodipicolinate synthase (296 aa).

Thr-49 lines the pyruvate pocket. Residue Tyr-137 is the Proton donor/acceptor of the active site. The Schiff-base intermediate with substrate role is filled by Lys-165. Ile-207 provides a ligand contact to pyruvate.

Belongs to the DapA family. Homotetramer; dimer of dimers.

Its subcellular location is the cytoplasm. The enzyme catalyses L-aspartate 4-semialdehyde + pyruvate = (2S,4S)-4-hydroxy-2,3,4,5-tetrahydrodipicolinate + H2O + H(+). It functions in the pathway amino-acid biosynthesis; L-lysine biosynthesis via DAP pathway; (S)-tetrahydrodipicolinate from L-aspartate: step 3/4. Functionally, catalyzes the condensation of (S)-aspartate-beta-semialdehyde [(S)-ASA] and pyruvate to 4-hydroxy-tetrahydrodipicolinate (HTPA). In Rhodopseudomonas palustris (strain BisA53), this protein is 4-hydroxy-tetrahydrodipicolinate synthase.